We begin with the raw amino-acid sequence, 141 residues long: Organic hydroperoxide resistance protein OhrA (141 aa).

It belongs to the OsmC/Ohr family.

Involved in organic hydroperoxide resistance. The protein is Organic hydroperoxide resistance protein OhrA (ohrA) of Bacillus subtilis (strain 168).